Reading from the N-terminus, the 142-residue chain is MAKKVQAYVKLQVAAGMANPSPPVGPALGQQGVNIMEFCKAFNAKTDSIEKGLPIPVVITVYSDRSFTFVTKTPPAAVLLKKAAGVKSGSGKPNKDKVGKVTRAQVREIAETKAADMTGADVEAMARSIEGTARSMGLVVED.

It belongs to the universal ribosomal protein uL11 family. In terms of assembly, part of the ribosomal stalk of the 50S ribosomal subunit. Interacts with L10 and the large rRNA to form the base of the stalk. L10 forms an elongated spine to which L12 dimers bind in a sequential fashion forming a multimeric L10(L12)X complex. In terms of processing, one or more lysine residues are methylated.

Forms part of the ribosomal stalk which helps the ribosome interact with GTP-bound translation factors. This Edwardsiella ictaluri (strain 93-146) protein is Large ribosomal subunit protein uL11.